We begin with the raw amino-acid sequence, 61 residues long: UPF0434 protein Nmul_A1027 (61 aa).

Belongs to the UPF0434 family.

In Nitrosospira multiformis (strain ATCC 25196 / NCIMB 11849 / C 71), this protein is UPF0434 protein Nmul_A1027.